We begin with the raw amino-acid sequence, 1017 residues long: Stereoselective keto-reductase af490 (1017 aa).

The interval 6-138 (NELSGSQVPG…GRLRMTFAGH (133 aa)) is N-terminal hotdog fold. The region spanning 6–311 (NELSGSQVPG…MSPIAPSTEK (306 aa)) is the PKS/mFAS DH domain. The segment at 8-306 (LSGSQVPGAT…LEGLTMSPIA (299 aa)) is dehydratase (DH). The segment at 153-311 (LRPVSISPFY…MSPIAPSTEK (159 aa)) is C-terminal hotdog fold. Residues 532–720 (QIRFLRAPFD…VQGGRLLIPR (189 aa)) are ketoreductase (KR).

The enzyme catalyses fumagillol + NADP(+) = 5-dehydrofumagillol + NADPH + H(+). It participates in secondary metabolite biosynthesis; terpenoid biosynthesis. Its function is as follows. Stereoselective keto-reductase; part of the gene cluster that mediates the biosynthesis of fumagillin, a meroterpenoid that has numerous biological activities including irreversible inhibition of human type 2 methionine aminopeptidase (METAP2). Within the pathway, the keto-reductase af490 acts as a 5-dehydrofumagillol 5-reductase that stereoselectively reduces 5-keto-fumagillol to 5R-hydroxy-seco-sesquiterpene. The pathway begins with the conversion of farnesyl pyrophosphate (FPP) to beta-trans-bergamotene by the membrane-bound beta-trans-bergamotene synthase af520. The multifunctional cytochrome P450 monooxygenase af510 then converts beta-trans-bergamotene into 5-keto-demethoxyfumagillol via several oxydation steps. 5-keto-demethoxyfumagillol is then subjected to successive C-6 hydroxylation and O-methylation by the dioxygenase af480 and O-methyltransferase af390-400, respectively, to yield 5-keto-fumagillol, which is then stereoselectively reduced by the keto-reductase af490 to 5R-hydroxy-seco-sesquiterpene. The next step is the polyketide transferase af380-catalyzed transfer of a dodecapentaenoyl group synthesized by the polyketide synthase af370 onto 5R-hydroxy-seco-sesquiterpene which leads to the production of prefumagillin. Finally, oxidative cleavage by the monooxygenase af470 converts prefumagillin to fumagillin. The protein is Stereoselective keto-reductase af490 of Aspergillus fumigatus (strain ATCC MYA-4609 / CBS 101355 / FGSC A1100 / Af293) (Neosartorya fumigata).